Consider the following 129-residue polypeptide: Follitropin subunit beta (129 aa).

Positions 1-18 (MKSVQFCFLFCCWRAICC) are cleaved as a signal peptide. 6 cysteine pairs are disulfide-bonded: Cys-21–Cys-69, Cys-35–Cys-84, Cys-38–Cys-122, Cys-46–Cys-100, Cys-50–Cys-102, and Cys-105–Cys-112. Residues Asn-25 and Asn-42 are each glycosylated (N-linked (GlcNAc...) asparagine).

The protein belongs to the glycoprotein hormones subunit beta family. Heterodimer. The active follitropin is a heterodimer composed of an alpha chain/CGA shared with other hormones and a unique beta chain/FSHB shown here.

Its subcellular location is the secreted. In terms of biological role, together with the alpha chain CGA constitutes follitropin, the follicle-stimulating hormone, and provides its biological specificity to the hormone heterodimer. Binds FSHR, a G protein-coupled receptor, on target cells to activate downstream signaling pathways. Follitropin is involved in follicle development and spermatogenesis in reproductive organs. This Capra hircus (Goat) protein is Follitropin subunit beta (FSHB).